The primary structure comprises 166 residues: Small ribosomal subunit protein uS5 (166 aa).

The 64-residue stretch at 11–74 folds into the S5 DRBM domain; the sequence is LIEKLVSVKR…ENAKKNMVSV (64 aa).

This sequence belongs to the universal ribosomal protein uS5 family. As to quaternary structure, part of the 30S ribosomal subunit. Contacts proteins S4 and S8.

Its function is as follows. With S4 and S12 plays an important role in translational accuracy. Functionally, located at the back of the 30S subunit body where it stabilizes the conformation of the head with respect to the body. This chain is Small ribosomal subunit protein uS5, found in Francisella tularensis subsp. holarctica (strain LVS).